Consider the following 152-residue polypeptide: Transcriptional regulator MraZ (152 aa).

SpoVT-AbrB domains are found at residues 5–52 and 81–124; these read ASAI…PVQE and AHEC…DEAA.

It belongs to the MraZ family. As to quaternary structure, forms oligomers.

Its subcellular location is the cytoplasm. It localises to the nucleoid. In Shewanella piezotolerans (strain WP3 / JCM 13877), this protein is Transcriptional regulator MraZ.